Reading from the N-terminus, the 459-residue chain is Interleukin-7 receptor subunit alpha (459 aa).

A signal peptide spans 1 to 20 (MTILGTTFGMVFSLLQVVSG). Topologically, residues 21–239 (ESGYAQNGDL…EINNSSGEMD (219 aa)) are extracellular. Cys42 and Cys57 are joined by a disulfide. N-linked (GlcNAc...) asparagine glycans are attached at residues Asn49 and Asn65. Cystine bridges form between Cys74–Cys82 and Cys108–Cys118. The 101-residue stretch at 131–231 (APFDLSVVYR…PSYYFRTPEI (101 aa)) folds into the Fibronectin type-III domain. N-linked (GlcNAc...) asparagine glycans are attached at residues Asn151 and Asn182. The WSXWS motif motif lies at 217–221 (WSEWS). N-linked (GlcNAc...) asparagine glycans are attached at residues Asn232 and Asn233. Residues 240–264 (PILLTISILSFFSVALLVILACVLW) traverse the membrane as a helical segment. Over 265 to 459 (KKRIKPIVWP…VTMSSFYQNQ (195 aa)) the chain is Cytoplasmic. The Box 1 motif signature appears at 272 to 280 (VWPSLPDHK). Phosphothreonine; by PKC is present on Thr282.

It belongs to the type I cytokine receptor family. Type 4 subfamily. The IL7 receptor is a heterodimer of IL7R and IL2RG. The TSLP receptor is a heterodimer of CRLF2 and IL7R. Interacts with CD53. Post-translationally, N-glycosylated IL-7Ralpha binds IL7 300-fold more tightly than the unglycosylated form. In terms of processing, ubiquitinated by MARCHF8; leading to lysosomal degradation.

The protein localises to the cell membrane. The protein resides in the secreted. In terms of biological role, receptor for interleukin-7. Also acts as a receptor for thymic stromal lymphopoietin (TSLP). This chain is Interleukin-7 receptor subunit alpha (IL7R), found in Homo sapiens (Human).